A 344-amino-acid polypeptide reads, in one-letter code: sn-glycerol-3-phosphate import ATP-binding protein UgpC 2 (344 aa).

Residues 4 to 234 form the ABC transporter domain; it reads IELIDLKKNY…PETVFVAGFI (231 aa). 36-43 provides a ligand contact to ATP; sequence GPSGCGKS.

The protein belongs to the ABC transporter superfamily. sn-glycerol-3-phosphate importer (TC 3.A.1.1.3) family. As to quaternary structure, the complex is composed of two ATP-binding proteins (UgpC), two transmembrane proteins (UgpA and UgpE) and a solute-binding protein (UgpB).

It is found in the cell inner membrane. It carries out the reaction sn-glycerol 3-phosphate(out) + ATP + H2O = sn-glycerol 3-phosphate(in) + ADP + phosphate + H(+). Its function is as follows. Part of the ABC transporter complex UgpBAEC involved in sn-glycerol-3-phosphate (G3P) import. Responsible for energy coupling to the transport system. The polypeptide is sn-glycerol-3-phosphate import ATP-binding protein UgpC 2 (Rhizobium johnstonii (strain DSM 114642 / LMG 32736 / 3841) (Rhizobium leguminosarum bv. viciae)).